The sequence spans 397 residues: Elongation factor Tu (397 aa).

In terms of domain architecture, tr-type G spans 10-206 (KPHVNIGTIG…AVDSYIPTPE (197 aa)). Residues 19 to 26 (GHVDHGKT) form a G1 region. 19 to 26 (GHVDHGKT) serves as a coordination point for GTP. Thr26 contributes to the Mg(2+) binding site. The interval 60–64 (GITIN) is G2. The G3 stretch occupies residues 81–84 (DCPG). GTP contacts are provided by residues 81–85 (DCPGH) and 136–139 (NKAD). The interval 136–139 (NKAD) is G4. The tract at residues 174–176 (SAL) is G5.

This sequence belongs to the TRAFAC class translation factor GTPase superfamily. Classic translation factor GTPase family. EF-Tu/EF-1A subfamily. Monomer.

It is found in the cytoplasm. It carries out the reaction GTP + H2O = GDP + phosphate + H(+). GTP hydrolase that promotes the GTP-dependent binding of aminoacyl-tRNA to the A-site of ribosomes during protein biosynthesis. This chain is Elongation factor Tu, found in Clostridium perfringens (strain ATCC 13124 / DSM 756 / JCM 1290 / NCIMB 6125 / NCTC 8237 / Type A).